Here is a 181-residue protein sequence, read N- to C-terminus: Mating-type M-specific polypeptide Mc (181 aa).

A DNA-binding region (HMG box) is located at residues Thr-103–Lys-171.

It localises to the nucleus. The protein localises to the cytoplasm. It is found in the cytoskeleton. Its subcellular location is the microtubule organizing center. The protein resides in the spindle pole body. In terms of biological role, mating type proteins are sequence specific DNA-binding proteins that act as master switches in yeast differentiation by controlling gene expression in a cell type-specific fashion. Positive regulator of MFM genes. The HMG box recognizes the DNA sequence 5'-AACAAAG-3'. Required for conjugation and efficient meiosis. This is Mating-type M-specific polypeptide Mc (mat3-Mc) from Schizosaccharomyces pombe (Fission yeast).